Reading from the N-terminus, the 76-residue chain is Serine palmitoyltransferase small subunit B (76 aa).

The Cytoplasmic portion of the chain corresponds to 1-11 (MDFKRVKDYLS). Residues 12-29 (WLYYQYQIISCCAVLEPW) traverse the membrane as a helical segment. The Lumenal segment spans residues 30 to 36 (EQSMFNT). The chain crosses the membrane as a helical span at residues 37-57 (IILTIFAMVVYTAYVFIPIHI). At 58–76 (RLAWEFFSKMCGYHSTISN) the chain is on the cytoplasmic side.

Belongs to the SPTSS family. SPTSSB subfamily. As to quaternary structure, component of the serine palmitoyltransferase (SPT) complex, which is composed of SPTLC1, SPTLC2 or SPTLC3 and SPTSSA or SPTSSB. The heterodimer consisting of SPTLC1 and SPTLC2/SPTLC3 forms the catalytic core of the enzyme, while SPTSSA or SPTSSB subunits determine substrate specificity. SPT also interacts with ORMDL proteins, especially ORMDL3, which negatively regulate SPT activity in the presence of ceramides.

It localises to the endoplasmic reticulum membrane. It functions in the pathway lipid metabolism; sphingolipid metabolism. Component of the serine palmitoyltransferase multisubunit enzyme (SPT) that catalyzes the initial and rate-limiting step in sphingolipid biosynthesis by condensing L-serine and activated acyl-CoA (most commonly palmitoyl-CoA) to form long-chain bases. The SPT complex is composed of SPTLC1, SPTLC2 or SPTLC3 and SPTSSA or SPTSSB. Within this complex, the heterodimer consisting of SPTLC1 and SPTLC2/SPTLC3 forms the catalytic core. Within the SPT complex, SPTSSB stimulates the catalytic activity and plays a role in substrate specificity. SPT complexes with this subunit showing a preference for longer acyl-CoAs. The SPTLC1-SPTLC2-SPTSSB complex shows a strong preference for C18-CoA substrate, while the SPTLC1-SPTLC3-SPTSSB isozyme displays an ability to use a broader range of acyl-CoAs, without apparent preference. This is Serine palmitoyltransferase small subunit B (SPTSSB) from Bos taurus (Bovine).